A 229-amino-acid polypeptide reads, in one-letter code: UPF0500 protein C1orf216 (229 aa).

The segment at 1–144 (MFAIQPGLAE…RGPGPPDPLL (144 aa)) is disordered. Polar residues predominate over residues 62-71 (SESPSDNQAF). Low complexity-rich tracts occupy residues 84–93 (PPEGAEIPGA) and 115–126 (SSSLSIDSRSSS).

It belongs to the UPF0500 family.

This Homo sapiens (Human) protein is UPF0500 protein C1orf216 (C1orf216).